Here is an 801-residue protein sequence, read N- to C-terminus: Leucine--tRNA ligase (801 aa).

Residues 39–50 (PYPSGAGIHVGH) carry the 'HIGH' region motif. The short motif at 578 to 582 (KMSKS) is the 'KMSKS' region element. ATP is bound at residue Lys581.

Belongs to the class-I aminoacyl-tRNA synthetase family.

Its subcellular location is the cytoplasm. It carries out the reaction tRNA(Leu) + L-leucine + ATP = L-leucyl-tRNA(Leu) + AMP + diphosphate. This Mesoplasma florum (strain ATCC 33453 / NBRC 100688 / NCTC 11704 / L1) (Acholeplasma florum) protein is Leucine--tRNA ligase.